Reading from the N-terminus, the 1589-residue chain is MAKQLNLPENTDDWTKEDVNQWLESHKIDQKHREILTEQDVNGAVLKWLKKEHLVDMGITHGPAIQIEELFKELRKTAIEDSIQTSKMGKPSKNAPKDQTVSQKERRETSKQKQKGKENPDMANPSAMSTTAKGSKSLKVELIEDKIDYTKERQPSIDLTCVSYPFDEFSNPYRYKLDFSLQPETGPGNLIDPIHEFKAFTNTATATEEDVKMKFSNEVFRFASACMNSRTNGTIHFGVKDKPHGKIVGIKVTNDTKEALINHFNLMINKYFEDHQVQQAKKCIREPRFVEVLLPNSTLSDRFVIEVDIIPQFSECQYDYFQIKMQNYNNKIWEQSKKFSLFVRDGTSSKDITKNKVDFRAFKADFKTLAESRKAAEEKFRAKTNKKEREGPKLVKLLTGNQDLLDNSYYEQYILVTNKCHPDQTKHLDFLKEIKWFAVLEFDPESNINGVVKAYKESRVANLHFPSVYVEQKTTPNETISTLNLYHQPSWIFCNGRLDLDSEKYKPFDPSSWQRERASDVRKLISFLTHEDIMPRGKFLVVFLLLSSVDDPRDPLIETFCAFYQDLKGMENILCICVHPHIFQGWKDLLEARLIKHQDEISSQCISALSLEEINGTILKLKSVTQSSKRLLPSIGLSTVLLKKEEDIMTALEIICENECEGTLLEKDKNKFLEFKASKEEDFYRGGKVSWWNFYFSSESYSSPFVKRDKYERLEAMIQNCADSSKPTSTKIIHLYHHPGCGGTTLAMHILWELRKKFRCAVLKNKTVDFSEIGEQVTSLITYGAMNRQEYVPVLLLVDDFEEQDNVYLLQYSIQTAIAKKYIRYEKPLVIILNCMRSQNPEKSARIPDSIAVIQQLSPKEQRAFELKLKEIKEQHKNFEDFYSFMIMKTNFNKEYIENVVRNILKGQNIFTKEAKLFSFLALLNSYVPDTTISLSQCEKFLGIGNKKAFWGTEKFEDKMGTYSTILIKTEVIECGNYCGVRIIHSLIAEFSLEELKKSYHLNKSQIMLDMLTENLFFDTGMGKSKFLQDMHTLLLTRHRDEHEGETGNWFSPFIEALHKDEGNEAVEAVLLESIHRFNPNAFICQALARHFYIKKKDFGNALNWAKQAKIIEPDNSYISDTLGQVYKSKIRWWIEENGGNGNISVDDLIALLDLAEHASSAFKESQQQSEDREYEVKERLYPKSKRRYDTYNIAGYQGEIEVGLYTIQILQLIPFFDNKNELSKRYMVNFVSGSSDIPGDPNNEYKLALKNYIPYLTKLKFSLKKSFDFFDEYFVLLKPRNNIKQNEEAKTRRKVAGYFKKYVDIFCLLEESQNNTGLGSKFSEPLQVERCRRNLVALKADKFSGLLEYLIKSQEDAISTMKCIVNEYTFLLEQCTVKIQSKEKLNFILANIILSCIQPTSRLVKPVEKLKDQLREVLQPIGLTYQFSEPYFLASLLFWPENQQLDQHSEQMKEYAQALKNSFKGQYKHMHRTKQPIAYFFLGKGKRLERLVHKGKIDQCFKKTPDINSLWQSGDVWKEEKVQELLLRLQGRAENNCLYIEYGINEKITIPITPAFLGQLRSGRSIEKVSFYLGFSIGGPLAYDIEIV.

Positions 14 to 78 (WTKEDVNQWL…ELFKELRKTA (65 aa)) constitute an SAM domain. The tract at residues 83–135 (IQTSKMGKPSKNAPKDQTVSQKERRETSKQKQKGKENPDMANPSAMSTTAKGS) is disordered. Over residues 103-120 (QKERRETSKQKQKGKENP) the composition is skewed to basic and acidic residues.

As to quaternary structure, interacts with RGL2. Interacts with EEA1. In terms of assembly, (Microbial infection) Interacts with myxoma virus protein M062. As to expression, widely expressed. Very low levels are detected in skeletal muscle. Not detected in brain. Down-regulated in aggressive fibromatosis, as well as in breast and colon cancers. Up-regulated in fibroblasts from patients with normophosphatemic tumoral calcinosis (NFTC).

The protein localises to the cytoplasm. In terms of biological role, double-stranded nucleic acid binding that acts as an antiviral factor by playing an essential role in the formation of cytoplasmic antiviral granules. May play a role in the inflammatory response to tissue injury and the control of extra-osseous calcification, acting as a downstream target of TNF-alpha signaling. Involved in the regulation of EGR1, in coordination with RGL2. May be involved in endosome fusion. In Homo sapiens (Human), this protein is Sterile alpha motif domain-containing protein 9 (SAMD9).